We begin with the raw amino-acid sequence, 394 residues long: Ornithine aminotransferase 1 (394 aa).

At K252 the chain carries N6-(pyridoxal phosphate)lysine.

This sequence belongs to the class-III pyridoxal-phosphate-dependent aminotransferase family. OAT subfamily. Pyridoxal 5'-phosphate serves as cofactor.

It localises to the cytoplasm. It carries out the reaction a 2-oxocarboxylate + L-ornithine = L-glutamate 5-semialdehyde + an L-alpha-amino acid. The protein operates within amino-acid biosynthesis; L-proline biosynthesis; L-glutamate 5-semialdehyde from L-ornithine: step 1/1. Catalyzes the interconversion of ornithine to glutamate semialdehyde. This chain is Ornithine aminotransferase 1, found in Staphylococcus aureus (strain COL).